A 290-amino-acid polypeptide reads, in one-letter code: Tubulin beta-4B chain (290 aa).

Positions 1–4 (MREI) match the MREI motif motif. Gln-11 is a binding site for GTP. The residue at position 55 (Thr-55) is a Phosphothreonine. Lys-58 bears the N6-acetyllysine mark. 6 residues coordinate GTP: Glu-69, Ser-138, Gly-142, Thr-143, Gly-144, and Asn-172. A Mg(2+)-binding site is contributed by Glu-69.

This sequence belongs to the tubulin family. As to quaternary structure, dimer of alpha and beta chains. A typical microtubule is a hollow water-filled tube with an outer diameter of 25 nm and an inner diameter of 15 nM. Alpha-beta heterodimers associate head-to-tail to form protofilaments running lengthwise along the microtubule wall with the beta-tubulin subunit facing the microtubule plus end conferring a structural polarity. Microtubules usually have 13 protofilaments but different protofilament numbers can be found in some organisms and specialized cells. Component of sperm flagellar doublet microtubules. It depends on Mg(2+) as a cofactor. In terms of processing, some glutamate residues at the C-terminus are polyglycylated, resulting in polyglycine chains on the gamma-carboxyl group. Glycylation is mainly limited to tubulin incorporated into axonemes (cilia and flagella) whereas glutamylation is prevalent in neuronal cells, centrioles, axonemes, and the mitotic spindle. Both modifications can coexist on the same protein on adjacent residues, and lowering polyglycylation levels increases polyglutamylation, and reciprocally. Cilia and flagella glycylation is required for their stability and maintenance. Flagella glycylation controls sperm motility. Post-translationally, some glutamate residues at the C-terminus are polyglutamylated, resulting in polyglutamate chains on the gamma-carboxyl group. Polyglutamylation plays a key role in microtubule severing by spastin (SPAST). SPAST preferentially recognizes and acts on microtubules decorated with short polyglutamate tails: severing activity by SPAST increases as the number of glutamates per tubulin rises from one to eight, but decreases beyond this glutamylation threshold. Glutamylation is also involved in cilia motility.

It localises to the cytoplasm. The protein resides in the cytoskeleton. The protein localises to the flagellum axoneme. Functionally, tubulin is the major constituent of microtubules, a cylinder consisting of laterally associated linear protofilaments composed of alpha- and beta-tubulin heterodimers. Microtubules grow by the addition of GTP-tubulin dimers to the microtubule end, where a stabilizing cap forms. Below the cap, tubulin dimers are in GDP-bound state, owing to GTPase activity of alpha-tubulin. The chain is Tubulin beta-4B chain (TUBB4B) from Mesocricetus auratus (Golden hamster).